We begin with the raw amino-acid sequence, 191 residues long: 3-isopropylmalate dehydratase small subunit (191 aa).

This sequence belongs to the LeuD family. LeuD type 1 subfamily. In terms of assembly, heterodimer of LeuC and LeuD.

The enzyme catalyses (2R,3S)-3-isopropylmalate = (2S)-2-isopropylmalate. It participates in amino-acid biosynthesis; L-leucine biosynthesis; L-leucine from 3-methyl-2-oxobutanoate: step 2/4. Catalyzes the isomerization between 2-isopropylmalate and 3-isopropylmalate, via the formation of 2-isopropylmaleate. This Anaeromyxobacter dehalogenans (strain 2CP-C) protein is 3-isopropylmalate dehydratase small subunit.